Consider the following 1733-residue polypeptide: Protein NETWORKED 1D (1733 aa).

The region spanning Tyr12–Ile92 is the NAB domain. Coiled coils occupy residues Lys195–Ser816, Leu897–Ser931, Asp960–Ile1043, and Ala1196–Met1386. The tract at residues Leu1456–His1476 is disordered. Over residues Ser1460 to Ser1470 the composition is skewed to basic residues. Coiled-coil stretches lie at residues Ala1553–Asn1627 and Ser1653–Asp1686. Positions Gly1628 to Ala1656 are disordered.

It belongs to the NET family.

Plant-specific actin binding protein. May be part of a membrane-cytoskeletal adapter complex. This Arabidopsis thaliana (Mouse-ear cress) protein is Protein NETWORKED 1D.